A 195-amino-acid chain; its full sequence is Mannitol operon repressor (195 aa).

Belongs to the MtlR/FumE family. In terms of assembly, homodimer. Can also form higher level multimer aggregates.

Its function is as follows. Involved in the repression of the expression of the mannitol mtlADR operon. Does not bind the operator/promoter regulatory region of this operon. Therefore, seems to belong to a new class of transcription factors in bacteria that may regulate gene expression indirectly, perhaps as a part of a larger transcriptional complex. This chain is Mannitol operon repressor, found in Escherichia coli O6:H1 (strain CFT073 / ATCC 700928 / UPEC).